Consider the following 507-residue polypeptide: MQQAIEQTSINGALRFNGIGKVFPGVKALSDISFEARPGSVHALMGENGAGKSTLLKILGGSYQPNSGTLQIGEQSYQFKSTAESIAAGVAVIHQELHLVPEMTVAENLLLGHMPNRFGLINRGAMYRRAGELLKGLADEIDPRTRLGDLSLGQRQLVEIAKAMSRNAHVIAFDEPTSSLSAREIDRLMAIIVRLRDEGRVILYVSHRMEEIFRVCDAVTVFKDGRFVKTFEQMADLDHDRLVTCMVGRDIQNIYNYRPRQHQGPSLRVTGLLGPGLHEPVSFAVEKGEVLGFFGLVGAGRTELFRLLSGLTRSTAGTLQLDGKPLTLKSPRDSIEAGILLCPEDRKKEGIVPLSSVAENINIGARPRHVNLGCLIQGRWERDNARSQIKSMNVKTPSPEQQIMFLSGGNQQKAILGRWLSMPMKVLLLDEPTRGIDVGAKSEIYEIIHNLAADGIAVIVVSSDLMEVMGISDRILVMSEGAITGELNRDEADESRLLQLALPRTRS.

ABC transporter domains are found at residues 14–249 (LRFN…MVGR) and 249–505 (RDIQ…LPRT). 46 to 53 (GENGAGKS) is a binding site for ATP.

The protein belongs to the ABC transporter superfamily. Arabinose importer (TC 3.A.1.2.2) family. As to quaternary structure, the complex is composed of two ATP-binding proteins (AraG), two transmembrane proteins (AraH) and a solute-binding protein (AraF).

Its subcellular location is the cell inner membrane. It catalyses the reaction L-arabinose(out) + ATP + H2O = L-arabinose(in) + ADP + phosphate + H(+). Functionally, part of the ABC transporter complex AraFGH involved in arabinose import. Responsible for energy coupling to the transport system. This is Arabinose import ATP-binding protein AraG from Pseudomonas savastanoi pv. phaseolicola (strain 1448A / Race 6) (Pseudomonas syringae pv. phaseolicola (strain 1448A / Race 6)).